We begin with the raw amino-acid sequence, 706 residues long: Parasporal crystal protein Cry18Aa (706 aa).

The protein belongs to the delta endotoxin family.

In terms of biological role, binds to the brush border membrane vesicles of scarab larvae and somehow damages the gut wall to allow the vegetative cells of P.popilliae to enter the hemolymph. Active on M.melolontha. This Paenibacillus popilliae (Bacillus popilliae) protein is Parasporal crystal protein Cry18Aa (cry18Aa).